The primary structure comprises 491 residues: Aspartyl/glutamyl-tRNA(Asn/Gln) amidotransferase subunit B (491 aa).

The protein belongs to the GatB/GatE family. GatB subfamily. In terms of assembly, heterotrimer of A, B and C subunits.

It catalyses the reaction L-glutamyl-tRNA(Gln) + L-glutamine + ATP + H2O = L-glutaminyl-tRNA(Gln) + L-glutamate + ADP + phosphate + H(+). The enzyme catalyses L-aspartyl-tRNA(Asn) + L-glutamine + ATP + H2O = L-asparaginyl-tRNA(Asn) + L-glutamate + ADP + phosphate + 2 H(+). Functionally, allows the formation of correctly charged Asn-tRNA(Asn) or Gln-tRNA(Gln) through the transamidation of misacylated Asp-tRNA(Asn) or Glu-tRNA(Gln) in organisms which lack either or both of asparaginyl-tRNA or glutaminyl-tRNA synthetases. The reaction takes place in the presence of glutamine and ATP through an activated phospho-Asp-tRNA(Asn) or phospho-Glu-tRNA(Gln). The polypeptide is Aspartyl/glutamyl-tRNA(Asn/Gln) amidotransferase subunit B (Nostoc sp. (strain PCC 7120 / SAG 25.82 / UTEX 2576)).